The sequence spans 327 residues: MKITVLVGGVGGARFLLGVQNLLGLGSFADGPSKHELTAVVNIGDDAWMHGVRICPDLDTCMYTLGGGIDPDRGWGHRNETWNAKEELAAYGVQPDWFGLGDRDLATHLVRSQMLRAGYPLSQVTEALCKRWQPGARLLPASDERSETHVVITDPTDGERRAIHFQEWWVRYRAKVPTHSFAYVGADQATAGPGVVEAIGDADIVLLAPSNPVVSIGPILQIPGIRGALRSTSAPVIGYSPIIAGKPLRGMADECLKVIGVESTSQAVGEFFGARAGTGLLDGWLVHEGDHAQIEGVKVKAVPLLMTDPEATAAMVRAGLDLAGVSL.

Position 59 (aspartate 59) interacts with 7,8-didemethyl-8-hydroxy-5-deazariboflavin.

Belongs to the CofD family. As to quaternary structure, homodimer. Requires Mg(2+) as cofactor.

The enzyme catalyses enolpyruvoyl-2-diphospho-5'-guanosine + 7,8-didemethyl-8-hydroxy-5-deazariboflavin = dehydro coenzyme F420-0 + GMP + H(+). It functions in the pathway cofactor biosynthesis; coenzyme F420 biosynthesis. Its function is as follows. Catalyzes the transfer of the phosphoenolpyruvate moiety from enoylpyruvoyl-2-diphospho-5'-guanosine (EPPG) to 7,8-didemethyl-8-hydroxy-5-deazariboflavin (FO) with the formation of dehydro coenzyme F420-0 and GMP. This chain is Phosphoenolpyruvate transferase, found in Mycolicibacterium smegmatis (strain ATCC 700084 / mc(2)155) (Mycobacterium smegmatis).